The chain runs to 345 residues: 3-dehydroquinate synthase (345 aa).

It belongs to the archaeal-type DHQ synthase family.

The enzyme catalyses 2-amino-2,3,7-trideoxy-D-lyxo-hept-6-ulosonate + NAD(+) + H2O = 3-dehydroquinate + NH4(+) + NADH + H(+). Catalyzes the oxidative deamination and cyclization of 2-amino-3,7-dideoxy-D-threo-hept-6-ulosonic acid (ADH) to yield 3-dehydroquinate (DHQ), which is fed into the canonical shikimic pathway of aromatic amino acid biosynthesis. This is 3-dehydroquinate synthase from Methanocorpusculum labreanum (strain ATCC 43576 / DSM 4855 / Z).